Consider the following 1889-residue polypeptide: Protein TIC 214 (1889 aa).

6 helical membrane-spanning segments follow: residues 11 to 31, 67 to 87, 88 to 108, 127 to 147, 175 to 195, and 224 to 244; these read LISL…YYGF, FIAG…HLAL, GKPH…FFWN, LSIQ…HFIL, VGWL…LVWI, and IFSI…PSPI. The span at 255-265 shows a compositional bias: acidic residues; sequence PEEVGESEEER. Disordered stretches follow at residues 255–303 and 1610–1633; these read PEEV…PSKE and SNQE…KKKQ. The segment covering 279–293 has biased composition (polar residues); it reads NQKQGTEENTSSSLF.

Belongs to the TIC214 family. In terms of assembly, part of the Tic complex.

The protein resides in the plastid. It localises to the chloroplast inner membrane. Involved in protein precursor import into chloroplasts. May be part of an intermediate translocation complex acting as a protein-conducting channel at the inner envelope. The sequence is that of Protein TIC 214 from Gossypium barbadense (Sea Island cotton).